The primary structure comprises 169 residues: uncharacterized protein (169 aa).

Positions 1–21 are cleaved as a signal peptide; the sequence is MVPVARASLFTLACLLVSVCA.

Component of the acid-soluble and acid-insoluble organic matrix of calcified shell layers (at protein level).

The protein resides in the secreted. This is an uncharacterized protein from Haliotis asinina (Donkey's ear abalone).